A 324-amino-acid chain; its full sequence is Methenyltetrahydromethanopterin cyclohydrolase (324 aa).

The protein belongs to the MCH family.

It is found in the cytoplasm. The enzyme catalyses 5,10-methenyl-5,6,7,8-tetrahydromethanopterin + H2O = N(5)-formyl-5,6,7,8-tetrahydromethanopterin + H(+). The protein operates within one-carbon metabolism; formaldehyde degradation; formate from formaldehyde (H(4)MPT route): step 3/5. In terms of biological role, catalyzes the hydrolysis of methenyl-H(4)MPT(+) to 5-formyl-H(4)MPT. The sequence is that of Methenyltetrahydromethanopterin cyclohydrolase from Methylobacterium nodulans (strain LMG 21967 / CNCM I-2342 / ORS 2060).